We begin with the raw amino-acid sequence, 444 residues long: Methylenetetrahydrofolate--tRNA-(uracil-5-)-methyltransferase TrmFO (444 aa).

FAD is bound at residue 10–15 (GAGLAG).

This sequence belongs to the MnmG family. TrmFO subfamily. FAD is required as a cofactor.

It localises to the cytoplasm. The enzyme catalyses uridine(54) in tRNA + (6R)-5,10-methylene-5,6,7,8-tetrahydrofolate + NADH + H(+) = 5-methyluridine(54) in tRNA + (6S)-5,6,7,8-tetrahydrofolate + NAD(+). It carries out the reaction uridine(54) in tRNA + (6R)-5,10-methylene-5,6,7,8-tetrahydrofolate + NADPH + H(+) = 5-methyluridine(54) in tRNA + (6S)-5,6,7,8-tetrahydrofolate + NADP(+). Its function is as follows. Catalyzes the folate-dependent formation of 5-methyl-uridine at position 54 (M-5-U54) in all tRNAs. This is Methylenetetrahydrofolate--tRNA-(uracil-5-)-methyltransferase TrmFO from Streptococcus gordonii (strain Challis / ATCC 35105 / BCRC 15272 / CH1 / DL1 / V288).